Consider the following 224-residue polypeptide: uncharacterized protein (224 aa).

The ABC transporter domain maps to 2–221; the sequence is IEAKNVWKIY…KLRDGEIVEI (220 aa). 38-45 contacts ATP; that stretch reads GPSGCGKS.

This sequence belongs to the ABC transporter superfamily.

This is an uncharacterized protein from Methanocaldococcus jannaschii (strain ATCC 43067 / DSM 2661 / JAL-1 / JCM 10045 / NBRC 100440) (Methanococcus jannaschii).